The following is a 1287-amino-acid chain: Rho GTPase-activating protein 33 (1287 aa).

Residues 1–40 (MVARSTDSLDGPGEGSVQPLPTAGGPSVKGKPGKRLSAPR) are disordered. Position 8 is a phosphoserine (S8). The PX; atypical domain maps to 59-168 (FGHIQLLLSP…CGPVLTWMEL (110 aa)). In terms of domain architecture, SH3 spans 186–248 (PAVAAAHVIK…PSECVELFTE (63 aa)). The Rho-GAP domain occupies 315–510 (CDLGEHLSNS…FLLTHVDVLF (196 aa)). 6 disordered regions span residues 551–792 (RTQG…SPAA), 813–832 (AGGA…GRSL), 859–1030 (KLRG…VPTP), 1056–1075 (GPPS…SLGP), 1090–1134 (GASE…SPDF), and 1146–1287 (PPDH…RSYC). A compositionally biased stretch (low complexity) spans 558-571 (TPTEPTTPKAPASP). S570 bears the Phosphoserine mark. The segment covering 572-584 (AERRKGERGEKQR) has biased composition (basic and acidic residues). Positions 622-645 (SGSRPDTVTLRSAKSEESLSSQAS) are enriched in polar residues. S636 carries the post-translational modification Phosphoserine. A compositionally biased stretch (low complexity) spans 672–709 (AGSCESLSSSSSSESSSSESSSSSSESSAAGLGALSGS). S727 bears the Phosphoserine mark. Residues 752–766 (PGDPAPPASPAPPAP) show a composition bias toward pro residues. 2 stretches are compositionally biased toward low complexity: residues 813 to 829 (AGGA…LSPG) and 896 to 919 (PARL…SQQE). Composition is skewed to polar residues over residues 972–981 (RQQSDGSLLR) and 1019–1028 (SPCSVPSQVP). Y1169 bears the Phosphotyrosine mark. Low complexity predominate over residues 1175–1189 (GPRGPSPASSSSSSP). Position 1244 is an omega-N-methylarginine (R1244). Over residues 1274-1287 (SWSLHSEGQTRSYC) the composition is skewed to polar residues.

The protein belongs to the PX domain-containing GAP family. In terms of assembly, specifically interacts with CDC42 and RHOQ/TC10 through its Rho-GAP domain. Interacts with NEK6.

In terms of biological role, may be involved in several stages of intracellular trafficking. Could play an important role in the regulation of glucose transport by insulin. May act as a downstream effector of RHOQ/TC10 in the regulation of insulin-stimulated glucose transport. This Homo sapiens (Human) protein is Rho GTPase-activating protein 33 (ARHGAP33).